The sequence spans 401 residues: Aspartokinase (401 aa).

The protein belongs to the aspartokinase family.

It catalyses the reaction L-aspartate + ATP = 4-phospho-L-aspartate + ADP. It functions in the pathway amino-acid biosynthesis; L-lysine biosynthesis via DAP pathway; (S)-tetrahydrodipicolinate from L-aspartate: step 1/4. The protein operates within amino-acid biosynthesis; L-methionine biosynthesis via de novo pathway; L-homoserine from L-aspartate: step 1/3. Its pathway is amino-acid biosynthesis; L-threonine biosynthesis; L-threonine from L-aspartate: step 1/5. The polypeptide is Aspartokinase (lysC) (Rickettsia conorii (strain ATCC VR-613 / Malish 7)).